Consider the following 605-residue polypeptide: Sulfite reductase [NADPH] flavoprotein alpha-component (605 aa).

Residues 68–206 (VTVLYGSQTG…PAAEWLEGVL (139 aa)) form the Flavodoxin-like domain. FMN contacts are provided by residues 74–78 (SQTGN), 121–126 (STHGEG), and 154–185 (VLAL…KRIS). The interval 213–234 (GGGSAAPAPAAASQTGESSYSR) is disordered. The FAD-binding FR-type domain maps to 235–454 (TNPFRAEVLE…VQHNQNFKLP (220 aa)). Residue 392–395 (RLYS) participates in FAD binding. Residues Asp-495 and 525 to 533 (SRDTEEKVY) each bind NADP(+).

As to quaternary structure, alpha(8)-beta(8). The alpha component is a flavoprotein, the beta component is a hemoprotein. Requires FAD as cofactor. FMN is required as a cofactor.

It carries out the reaction hydrogen sulfide + 3 NADP(+) + 3 H2O = sulfite + 3 NADPH + 4 H(+). Its pathway is sulfur metabolism; hydrogen sulfide biosynthesis; hydrogen sulfide from sulfite (NADPH route): step 1/1. Functionally, component of the sulfite reductase complex that catalyzes the 6-electron reduction of sulfite to sulfide. This is one of several activities required for the biosynthesis of L-cysteine from sulfate. The flavoprotein component catalyzes the electron flow from NADPH -&gt; FAD -&gt; FMN to the hemoprotein component. The protein is Sulfite reductase [NADPH] flavoprotein alpha-component (cysJ) of Bacillus subtilis (strain 168).